The sequence spans 483 residues: Regulatory protein ViaA (483 aa).

This sequence belongs to the ViaA family. As to quaternary structure, homodimer. Interacts with RavA.

It is found in the cytoplasm. In terms of biological role, component of the RavA-ViaA chaperone complex, which may act on the membrane to optimize the function of some of the respiratory chains. ViaA stimulates the ATPase activity of RavA. The sequence is that of Regulatory protein ViaA from Escherichia coli (strain SMS-3-5 / SECEC).